The chain runs to 285 residues: Non-homologous end joining protein Ku (285 aa).

The Ku domain occupies 9 to 176; it reads ISFGLVNVPV…PAEIRHLEAS (168 aa). The interval 250–285 is disordered; sequence AMTDQKKQQNTAESETEEKPTKSTLTPRGRRKVKGA.

It belongs to the prokaryotic Ku family. Homodimer. Interacts with LigD.

In terms of biological role, with LigD forms a non-homologous end joining (NHEJ) DNA repair enzyme, which repairs dsDNA breaks with reduced fidelity. Binds linear dsDNA with 5'- and 3'- overhangs but not closed circular dsDNA nor ssDNA. Recruits and stimulates the ligase activity of LigD. The polypeptide is Non-homologous end joining protein Ku (Desulfitobacterium hafniense (strain DSM 10664 / DCB-2)).